The chain runs to 569 residues: Urease subunit beta (569 aa).

The Urease domain occupies 131-569 (GGIDTHIHFI…LSLAQLYNLF (439 aa)). 3 residues coordinate Ni(2+): His136, His138, and Lys219. Lys219 is modified (N6-carboxylysine). His221 is a binding site for substrate. Positions 248 and 274 each coordinate Ni(2+). The active-site Proton donor is His322. Asp362 contacts Ni(2+).

Belongs to the metallo-dependent hydrolases superfamily. Urease alpha subunit family. Heterohexamer of 3 UreA (alpha) and 3 UreB (beta) subunits. It depends on Ni cation as a cofactor. In terms of processing, carboxylation allows a single lysine to coordinate two nickel ions.

Its subcellular location is the cytoplasm. The enzyme catalyses urea + 2 H2O + H(+) = hydrogencarbonate + 2 NH4(+). It participates in nitrogen metabolism; urea degradation; CO(2) and NH(3) from urea (urease route): step 1/1. This chain is Urease subunit beta, found in Helicobacter felis (strain ATCC 49179 / CCUG 28539 / NCTC 12436 / CS1).